The primary structure comprises 417 residues: Serine hydroxymethyltransferase (417 aa).

Residues Leu121 and 125–127 (GHL) contribute to the (6S)-5,6,7,8-tetrahydrofolate site. An N6-(pyridoxal phosphate)lysine modification is found at Lys229. 355-357 (SPF) is a (6S)-5,6,7,8-tetrahydrofolate binding site.

Belongs to the SHMT family. As to quaternary structure, homodimer. Requires pyridoxal 5'-phosphate as cofactor.

It localises to the cytoplasm. The enzyme catalyses (6R)-5,10-methylene-5,6,7,8-tetrahydrofolate + glycine + H2O = (6S)-5,6,7,8-tetrahydrofolate + L-serine. Its pathway is one-carbon metabolism; tetrahydrofolate interconversion. It participates in amino-acid biosynthesis; glycine biosynthesis; glycine from L-serine: step 1/1. Its function is as follows. Catalyzes the reversible interconversion of serine and glycine with tetrahydrofolate (THF) serving as the one-carbon carrier. This reaction serves as the major source of one-carbon groups required for the biosynthesis of purines, thymidylate, methionine, and other important biomolecules. Also exhibits THF-independent aldolase activity toward beta-hydroxyamino acids, producing glycine and aldehydes, via a retro-aldol mechanism. The protein is Serine hydroxymethyltransferase of Shewanella frigidimarina (strain NCIMB 400).